A 132-amino-acid polypeptide reads, in one-letter code: Fatty acid-binding protein type 2 (132 aa).

Ala2 carries the post-translational modification N-acetylalanine.

The protein belongs to the calycin superfamily. Fatty-acid binding protein (FABP) family.

The polypeptide is Fatty acid-binding protein type 2 (Fasciola hepatica (Liver fluke)).